Consider the following 215-residue polypeptide: MPGRGGQSLSMVCVDVWILALSVLSVMADATSVPVTESCDSQGPPGLPGPPGLPGPPGPPGPPGPPGLRGPTGIPGDIESCLSPPKSAFAVKMNDPLPAPSQPIVFKEALHNDQDHFNLTTGVFTCTIPGVYRFGFDIELFQHAVKLGLMKNDTQILEKESKAKDNYRHLSGNVVLQLTLGDRVWLESKLDTTETEKGPIQSMFFGYLLYGNYPG.

The first 30 residues, 1-30 (MPGRGGQSLSMVCVDVWILALSVLSVMADA), serve as a signal peptide directing secretion. Residues 35–79 (VTESCDSQGPPGLPGPPGLPGPPGPPGPPGPPGLRGPTGIPGDIE) form a disordered region. The Collagen-like domain occupies 43–76 (GPPGLPGPPGLPGPPGPPGPPGPPGLRGPTGIPG). Residues 45-68 (PGLPGPPGLPGPPGPPGPPGPPGL) are compositionally biased toward pro residues. One can recognise a C1q domain in the interval 82 to 215 (LSPPKSAFAV…GYLLYGNYPG (134 aa)).

It localises to the secreted. The sequence is that of Protein HP-25 homolog 2 from Bos taurus (Bovine).